The following is a 311-amino-acid chain: Sulfate adenylyltransferase subunit 2 (311 aa).

Belongs to the PAPS reductase family. CysD subfamily. As to quaternary structure, heterodimer composed of CysD, the smaller subunit, and CysN.

The catalysed reaction is sulfate + ATP + H(+) = adenosine 5'-phosphosulfate + diphosphate. Its pathway is sulfur metabolism; hydrogen sulfide biosynthesis; sulfite from sulfate: step 1/3. Its function is as follows. With CysN forms the ATP sulfurylase (ATPS) that catalyzes the adenylation of sulfate producing adenosine 5'-phosphosulfate (APS) and diphosphate, the first enzymatic step in sulfur assimilation pathway. APS synthesis involves the formation of a high-energy phosphoric-sulfuric acid anhydride bond driven by GTP hydrolysis by CysN coupled to ATP hydrolysis by CysD. This Methylobacterium sp. (strain 4-46) protein is Sulfate adenylyltransferase subunit 2.